The following is a 122-amino-acid chain: Large ribosomal subunit protein uL22 (122 aa).

The interval 102–122 (VAEGKEMKSSKSHKKNQAEGK) is disordered.

Belongs to the universal ribosomal protein uL22 family. In terms of assembly, part of the 50S ribosomal subunit.

Its function is as follows. This protein binds specifically to 23S rRNA; its binding is stimulated by other ribosomal proteins, e.g. L4, L17, and L20. It is important during the early stages of 50S assembly. It makes multiple contacts with different domains of the 23S rRNA in the assembled 50S subunit and ribosome. The globular domain of the protein is located near the polypeptide exit tunnel on the outside of the subunit, while an extended beta-hairpin is found that lines the wall of the exit tunnel in the center of the 70S ribosome. The polypeptide is Large ribosomal subunit protein uL22 (Helicobacter pylori (strain G27)).